The sequence spans 505 residues: Deoxyguanosinetriphosphate triphosphohydrolase (505 aa).

An HD domain is found at 66–273; sequence RLTHSMEVQQ…MEAADDISYC (208 aa).

This sequence belongs to the dGTPase family. Type 1 subfamily. Homotetramer. Requires Mg(2+) as cofactor.

It carries out the reaction dGTP + H2O = 2'-deoxyguanosine + triphosphate + H(+). Its function is as follows. dGTPase preferentially hydrolyzes dGTP over the other canonical NTPs. The polypeptide is Deoxyguanosinetriphosphate triphosphohydrolase (Salmonella typhimurium (strain LT2 / SGSC1412 / ATCC 700720)).